The chain runs to 306 residues: Methionyl-tRNA formyltransferase (306 aa).

108 to 111 (SLLP) lines the (6S)-5,6,7,8-tetrahydrofolate pocket.

It belongs to the Fmt family.

The catalysed reaction is L-methionyl-tRNA(fMet) + (6R)-10-formyltetrahydrofolate = N-formyl-L-methionyl-tRNA(fMet) + (6S)-5,6,7,8-tetrahydrofolate + H(+). Functionally, attaches a formyl group to the free amino group of methionyl-tRNA(fMet). The formyl group appears to play a dual role in the initiator identity of N-formylmethionyl-tRNA by promoting its recognition by IF2 and preventing the misappropriation of this tRNA by the elongation apparatus. The sequence is that of Methionyl-tRNA formyltransferase from Pseudarthrobacter chlorophenolicus (strain ATCC 700700 / DSM 12829 / CIP 107037 / JCM 12360 / KCTC 9906 / NCIMB 13794 / A6) (Arthrobacter chlorophenolicus).